An 843-amino-acid polypeptide reads, in one-letter code: Axin-2 (843 aa).

Positions 1–75 (MSSAMLVTCL…EGRASPDSPL (75 aa)) are disordered. The Tankyrase-binding motif signature appears at 21 to 30 (APRPPVPGEE). The span at 56–69 (RRNEDGLGEPEGRA) shows a compositional bias: basic and acidic residues. Positions 81–200 (SLHSLLGDQD…LTSDIYLEYV (120 aa)) constitute an RGS domain. An interaction with GSK3B region spans residues 327–413 (VGSKKQLQRE…REGSELTLNS (87 aa)). The segment at 334–393 (QREMHRSVKANGQVSLPHFPRTHRLPKEMTPVEPATFAAELISRLEKLKLELESRHSLEE) is interaction with SIAH1 and SIAH2. Disordered stretches follow at residues 396–435 (QQIR…EEDP), 447–494 (LKTP…AASP), 561–674 (APET…RTTP), and 718–748 (ASQQ…EDHK). An interaction with beta-catenin region spans residues 413 to 476 (SREGAPTQHP…PDHHHHHHSQ (64 aa)). Low complexity-rich tracts occupy residues 477-494 (YHSL…AASP) and 588-597 (PGLALPAREG). Residues 727-741 (SATVQTGATPFSNPS) are compositionally biased toward polar residues. The DIX domain occupies 761–843 (ASELVVTYFF…RILGKVERID (83 aa)).

In terms of assembly, interacts with glycogen synthase kinase-3 beta (GSK3B) and beta-catenin. The interaction between axin and beta-catenin occurs via the armadillo repeats contained in beta-catenin. Interacts with SMAD7 and RNF111. Interacts with ANKRD6. Interacts with SIAH1. Interacts with SIAH2. Post-translationally, probably phosphorylated by GSK3B and dephosphorylated by PP2A. ADP-ribosylated by tankyrase TNKS and TNKS2. Poly-ADP-ribosylated protein is recognized by RNF146, followed by ubiquitination and subsequent activation of the Wnt signaling pathway. In terms of processing, ubiquitinated by RNF146 when poly-ADP-ribosylated, leading to its degradation and subsequent activation of the Wnt signaling pathway. Deubiquitinated by USP34, deubiquitinated downstream of beta-catenin stabilization step: deubiquitination is important Wnt signaling to positively regulate beta-catenin (CTNBB1)-mediated transcription. Expressed in brain and lymphoblast.

The protein localises to the cytoplasm. Inhibitor of the Wnt signaling pathway. Down-regulates beta-catenin. Probably facilitate the phosphorylation of beta-catenin and APC by GSK3B. This chain is Axin-2 (AXIN2), found in Homo sapiens (Human).